We begin with the raw amino-acid sequence, 242 residues long: Small ribosomal subunit protein uS3 (242 aa).

The region spanning 39–110 is the KH type-2 domain; the sequence is IRRFIHKKYG…QVRINVVEVE (72 aa). The tract at residues 216–242 is disordered; sequence QSMPVGASPRRRGNRRPQQFEDRSNEG. Positions 233 to 242 are enriched in basic and acidic residues; the sequence is QQFEDRSNEG.

The protein belongs to the universal ribosomal protein uS3 family. As to quaternary structure, part of the 30S ribosomal subunit. Forms a tight complex with proteins S10 and S14.

Binds the lower part of the 30S subunit head. Binds mRNA in the 70S ribosome, positioning it for translation. This is Small ribosomal subunit protein uS3 from Prochlorococcus marinus (strain MIT 9303).